A 140-amino-acid chain; its full sequence is Nucleoside diphosphate kinase (140 aa).

Residues Lys11, Phe59, Arg87, Thr93, Arg104, and Asn114 each coordinate ATP. The Pros-phosphohistidine intermediate role is filled by His117.

This sequence belongs to the NDK family. As to quaternary structure, homotetramer. Requires Mg(2+) as cofactor.

The protein resides in the cytoplasm. The catalysed reaction is a 2'-deoxyribonucleoside 5'-diphosphate + ATP = a 2'-deoxyribonucleoside 5'-triphosphate + ADP. It carries out the reaction a ribonucleoside 5'-diphosphate + ATP = a ribonucleoside 5'-triphosphate + ADP. Functionally, major role in the synthesis of nucleoside triphosphates other than ATP. The ATP gamma phosphate is transferred to the NDP beta phosphate via a ping-pong mechanism, using a phosphorylated active-site intermediate. This is Nucleoside diphosphate kinase from Methylobacterium radiotolerans (strain ATCC 27329 / DSM 1819 / JCM 2831 / NBRC 15690 / NCIMB 10815 / 0-1).